We begin with the raw amino-acid sequence, 265 residues long: MSSTLSSHNVIALKASNLHLQLGGKTLLDNVDLEIRSGQITALLGPNGAGKSSLLKVLNGEITPNSGSIEIFSSPKDHWPSELLAKHMGILPQHSTLSFSFLAHEVAELGAMPLAISNHQAQQLAAKNMVKVGVDHLANRLYPTLSGGEKQRVHFARVLTQLSHSGEQCILMLDEPTSALDLAHQHHTLEIAQALSQQGAAVIIVIHDLNLAAQYADRLIILNQGKIQADGTPWQVLTPTAVENVYGWPVQVIAHPEHNYPVILA.

The 237-residue stretch at 13–249 (LKASNLHLQL…TAVENVYGWP (237 aa)) folds into the ABC transporter domain. Position 45 to 52 (45 to 52 (GPNGAGKS)) interacts with ATP.

It belongs to the ABC transporter superfamily. Heme (hemin) importer (TC 3.A.1.14.5) family. The complex is composed of two ATP-binding proteins (HmuV), two transmembrane proteins (HmuU) and a solute-binding protein (HmuT).

Its subcellular location is the cell inner membrane. In terms of biological role, part of the ABC transporter complex HmuTUV involved in hemin import. Responsible for energy coupling to the transport system. This is Hemin import ATP-binding protein HmuV from Photobacterium damsela subsp. piscicida (Pasteurella piscicida).